We begin with the raw amino-acid sequence, 611 residues long: Aspartate--tRNA(Asp/Asn) ligase (611 aa).

Glu-177 contributes to the L-aspartate binding site. The segment at Gln-201–Lys-204 is aspartate. L-aspartate is bound at residue Arg-223. ATP-binding positions include Arg-223–Glu-225 and Gln-232. His-461 lines the L-aspartate pocket. Glu-499 lines the ATP pocket. Position 506 (Arg-506) interacts with L-aspartate. ATP is bound at residue Gly-551–Arg-554.

The protein belongs to the class-II aminoacyl-tRNA synthetase family. Type 1 subfamily. Homodimer.

It localises to the cytoplasm. The enzyme catalyses tRNA(Asx) + L-aspartate + ATP = L-aspartyl-tRNA(Asx) + AMP + diphosphate. Aspartyl-tRNA synthetase with relaxed tRNA specificity since it is able to aspartylate not only its cognate tRNA(Asp) but also tRNA(Asn). Reaction proceeds in two steps: L-aspartate is first activated by ATP to form Asp-AMP and then transferred to the acceptor end of tRNA(Asp/Asn). The protein is Aspartate--tRNA(Asp/Asn) ligase of Synechococcus sp. (strain WH7803).